Reading from the N-terminus, the 313-residue chain is tRNA dimethylallyltransferase (313 aa).

Gly17–Thr24 is an ATP binding site. Thr19–Thr24 is a binding site for substrate. Interaction with substrate tRNA regions lie at residues Asp42–Leu45, Gln166–Arg170, and Arg247–Arg252.

Belongs to the IPP transferase family. Monomer. It depends on Mg(2+) as a cofactor.

The catalysed reaction is adenosine(37) in tRNA + dimethylallyl diphosphate = N(6)-dimethylallyladenosine(37) in tRNA + diphosphate. Catalyzes the transfer of a dimethylallyl group onto the adenine at position 37 in tRNAs that read codons beginning with uridine, leading to the formation of N6-(dimethylallyl)adenosine (i(6)A). The protein is tRNA dimethylallyltransferase of Serratia proteamaculans (strain 568).